We begin with the raw amino-acid sequence, 51 residues long: Cytoplasmic FMR1-interacting protein 1 (51 aa).

The protein belongs to the CYFIP family. As to quaternary structure, component of the WAVE1 complex composed of ABI2, CYFIP1 or CYFIP2, BRK1, NCKAP1 and WASF1/WAVE1. Within the complex, a heterodimer containing NCKAP1 and CYFIP1 interacts with a heterotrimer formed by WAVE1, ABI2 and BRK1. Component of the CYFIP1-EIF4E-FMR1 complex which is composed of CYFIP, EIF4E and FMR1. Interacts with FMR1 but does not bind to related proteins FXR1 or FXR2. Interaction with EIF4E stimulates FMR1 binding. Component of the WAVE2 complex composed of ABI1, CYFIP1/SRA1, NCKAP1/NAP1 (NCKAP1l/HEM1 in hematopoietic cells) and WASF2/WAVE2. Interacts with the active GTP-bound form of RAC1. Interacts through its C-terminus with the C-terminus of DPYSL2/CRMP2 which is necessary for DPYSL2-induced axon outgrowth. Interacts with NYAP1, NYAP2 and MYO16. Interacts with TMEM108 (via N-terminus); the interaction associates TMEM108 with the WAVE1 complex.

Its subcellular location is the cytoplasm. The protein localises to the perinuclear region. It localises to the cell projection. It is found in the lamellipodium. The protein resides in the ruffle. Its subcellular location is the synapse. The protein localises to the synaptosome. Functionally, component of the CYFIP1-EIF4E-FMR1 complex which binds to the mRNA cap and mediates translational repression. In the CYFIP1-EIF4E-FMR1 complex this subunit is an adapter between EIF4E and FMR1. Promotes the translation repression activity of FMR1 in brain probably by mediating its association with EIF4E and mRNA. Regulates formation of membrane ruffles and lamellipodia. Plays a role in axon outgrowth. Binds to F-actin but not to RNA. Part of the WAVE complex that regulates actin filament reorganization via its interaction with the Arp2/3 complex. Actin remodeling activity is regulated by RAC1. Regulator of epithelial morphogenesis. As component of the WAVE1 complex, required for BDNF-NTRK2 endocytic trafficking and signaling from early endosomes. In Bos taurus (Bovine), this protein is Cytoplasmic FMR1-interacting protein 1.